The sequence spans 699 residues: SHC SH2 domain-binding protein 1 homolog A (699 aa).

PbH1 repeat units follow at residues 480 to 502 (SAEL…EIYP), 503 to 524 (GSKC…LIKD), and 532 to 554 (IPKI…VLVK). Residues 603–627 (AVEHTNNLEKDQGNLAIAKEEVECE) adopt a coiled-coil conformation.

It is found in the midbody. The protein resides in the cytoplasm. Its subcellular location is the cytoskeleton. The protein localises to the spindle. May play a role in signaling pathways governing cellular proliferation. This is SHC SH2 domain-binding protein 1 homolog A (shcbp1-a) from Xenopus laevis (African clawed frog).